The chain runs to 389 residues: Succinate--CoA ligase [ADP-forming] subunit beta (389 aa).

One can recognise an ATP-grasp domain in the interval 9–244 (KQLLAEYGIP…KTQEDETEVT (236 aa)). ATP is bound by residues K46, 53 to 55 (GRG), G102, and E107. Mg(2+) contacts are provided by N199 and D213. Substrate contacts are provided by residues N264 and 321–323 (GIV).

The protein belongs to the succinate/malate CoA ligase beta subunit family. Heterotetramer of two alpha and two beta subunits. Requires Mg(2+) as cofactor.

The enzyme catalyses succinate + ATP + CoA = succinyl-CoA + ADP + phosphate. It carries out the reaction GTP + succinate + CoA = succinyl-CoA + GDP + phosphate. Its pathway is carbohydrate metabolism; tricarboxylic acid cycle; succinate from succinyl-CoA (ligase route): step 1/1. Its function is as follows. Succinyl-CoA synthetase functions in the citric acid cycle (TCA), coupling the hydrolysis of succinyl-CoA to the synthesis of either ATP or GTP and thus represents the only step of substrate-level phosphorylation in the TCA. The beta subunit provides nucleotide specificity of the enzyme and binds the substrate succinate, while the binding sites for coenzyme A and phosphate are found in the alpha subunit. The protein is Succinate--CoA ligase [ADP-forming] subunit beta of Xanthomonas oryzae pv. oryzae (strain MAFF 311018).